Here is a 178-residue protein sequence, read N- to C-terminus: CASP-like protein 2A2 (178 aa).

The Cytoplasmic portion of the chain corresponds to 1–22; sequence MDKTDQTAIDGSALELNRTEKT. Residues 23–43 traverse the membrane as a helical segment; sequence VEAVLRVASMALSITGLVIMI. At 44–69 the chain is on the extracellular side; the sequence is KNSISNDFGSLSYSNLGAFMYLVGAN. A helical transmembrane segment spans residues 70–90; that stretch reads GVCAAYSLLSALAILALPCPI. At 91 to 96 the chain is on the cytoplasmic side; the sequence is SKVQVR. The helical transmembrane segment at 97–117 threads the bilayer; the sequence is TLFLLDQVVTYVVLAAGAVSA. The Extracellular portion of the chain corresponds to 118–145; that stretch reads ETVYLAYYGNIPITWSSACDSYGIFCHK. The chain crosses the membrane as a helical span at residues 146 to 166; the sequence is ALISVVFTFVVSLLYMLLSLI. Over 167–178 the chain is Cytoplasmic; it reads SSYRLFSRFEAP.

This sequence belongs to the Casparian strip membrane proteins (CASP) family. In terms of assembly, homodimer and heterodimers.

The protein localises to the cell membrane. The sequence is that of CASP-like protein 2A2 from Arabidopsis lyrata subsp. lyrata (Lyre-leaved rock-cress).